Reading from the N-terminus, the 435-residue chain is Putative F-box/kelch-repeat protein At1g20790 (435 aa).

Positions 1 to 49 (MKRLPLHLLDEILFNLDPKSLGKMRCTNKSINTHISDDPNFKFEYFSRI) constitute an F-box domain. Kelch repeat units lie at residues 192–238 (PVYV…CTGD) and 280–335 (LYWN…LFKP).

The polypeptide is Putative F-box/kelch-repeat protein At1g20790 (Arabidopsis thaliana (Mouse-ear cress)).